The sequence spans 613 residues: Arginine--tRNA ligase (613 aa).

Residues 123-133 carry the 'HIGH' region motif; that stretch reads PNVAKPMHVGH.

Belongs to the class-I aminoacyl-tRNA synthetase family. In terms of assembly, monomer.

Its subcellular location is the cytoplasm. It carries out the reaction tRNA(Arg) + L-arginine + ATP = L-arginyl-tRNA(Arg) + AMP + diphosphate. In Caulobacter sp. (strain K31), this protein is Arginine--tRNA ligase.